The primary structure comprises 194 residues: Inner membrane-spanning protein YciB (194 aa).

Transmembrane regions (helical) follow at residues 3-23 (LFIE…AGIY), 47-67 (IPAK…LTIY), 76-96 (WKVT…NTFF), 119-139 (LNLA…YIAF), and 149-169 (FKVF…ILFL).

This sequence belongs to the YciB family.

The protein localises to the cell inner membrane. In terms of biological role, plays a role in cell envelope biogenesis, maintenance of cell envelope integrity and membrane homeostasis. The chain is Inner membrane-spanning protein YciB from Colwellia psychrerythraea (strain 34H / ATCC BAA-681) (Vibrio psychroerythus).